A 267-amino-acid polypeptide reads, in one-letter code: Hydroxyethylthiazole kinase (267 aa).

Residue Met-49 coordinates substrate. 2 residues coordinate ATP: Arg-124 and Thr-170. Substrate is bound at residue Gly-197.

It belongs to the Thz kinase family. Mg(2+) is required as a cofactor.

It carries out the reaction 5-(2-hydroxyethyl)-4-methylthiazole + ATP = 4-methyl-5-(2-phosphooxyethyl)-thiazole + ADP + H(+). Its pathway is cofactor biosynthesis; thiamine diphosphate biosynthesis; 4-methyl-5-(2-phosphoethyl)-thiazole from 5-(2-hydroxyethyl)-4-methylthiazole: step 1/1. Its function is as follows. Catalyzes the phosphorylation of the hydroxyl group of 4-methyl-5-beta-hydroxyethylthiazole (THZ). This chain is Hydroxyethylthiazole kinase, found in Tolumonas auensis (strain DSM 9187 / NBRC 110442 / TA 4).